The following is a 42-amino-acid chain: uncharacterized protein (42 aa).

A helical membrane pass occupies residues 10–30 (VANWVTVILMALAGYAVLALA).

It localises to the host membrane. This is an uncharacterized protein from Acinetobacter calcoaceticus (Arthrobacter siderocapsulatus).